The chain runs to 430 residues: Adenylosuccinate synthetase (430 aa).

Residues G12–K18 and G40–T42 contribute to the GTP site. D13 (proton acceptor) is an active-site residue. Positions 13 and 40 each coordinate Mg(2+). IMP is bound by residues D13–K16, N38–H41, T129, R143, Q224, T239, and R303. H41 (proton donor) is an active-site residue. T299–R305 lines the substrate pocket. GTP contacts are provided by residues R305, K331–D333, and S413–G415.

This sequence belongs to the adenylosuccinate synthetase family. Homodimer. Mg(2+) serves as cofactor.

Its subcellular location is the cytoplasm. It catalyses the reaction IMP + L-aspartate + GTP = N(6)-(1,2-dicarboxyethyl)-AMP + GDP + phosphate + 2 H(+). Its pathway is purine metabolism; AMP biosynthesis via de novo pathway; AMP from IMP: step 1/2. Plays an important role in the de novo pathway of purine nucleotide biosynthesis. Catalyzes the first committed step in the biosynthesis of AMP from IMP. This Ehrlichia chaffeensis (strain ATCC CRL-10679 / Arkansas) protein is Adenylosuccinate synthetase.